Here is a 271-residue protein sequence, read N- to C-terminus: Acetyl-coenzyme A carboxylase carboxyl transferase subunit beta (271 aa).

The CoA carboxyltransferase N-terminal domain occupies leucine 21–alanine 271. Zn(2+) is bound by residues cysteine 25, cysteine 28, cysteine 43, and cysteine 46. A C4-type zinc finger spans residues cysteine 25–cysteine 46.

This sequence belongs to the AccD/PCCB family. In terms of assembly, acetyl-CoA carboxylase is a heterohexamer composed of biotin carboxyl carrier protein (AccB), biotin carboxylase (AccC) and two subunits each of ACCase subunit alpha (AccA) and ACCase subunit beta (AccD). Zn(2+) serves as cofactor.

The protein resides in the cytoplasm. It catalyses the reaction N(6)-carboxybiotinyl-L-lysyl-[protein] + acetyl-CoA = N(6)-biotinyl-L-lysyl-[protein] + malonyl-CoA. It participates in lipid metabolism; malonyl-CoA biosynthesis; malonyl-CoA from acetyl-CoA: step 1/1. Functionally, component of the acetyl coenzyme A carboxylase (ACC) complex. Biotin carboxylase (BC) catalyzes the carboxylation of biotin on its carrier protein (BCCP) and then the CO(2) group is transferred by the transcarboxylase to acetyl-CoA to form malonyl-CoA. This chain is Acetyl-coenzyme A carboxylase carboxyl transferase subunit beta, found in Lacticaseibacillus casei (strain BL23) (Lactobacillus casei).